Here is a 103-residue protein sequence, read N- to C-terminus: UPF0145 protein BC_1816 (103 aa).

It belongs to the UPF0145 family.

This Bacillus cereus (strain ATCC 14579 / DSM 31 / CCUG 7414 / JCM 2152 / NBRC 15305 / NCIMB 9373 / NCTC 2599 / NRRL B-3711) protein is UPF0145 protein BC_1816.